The following is a 199-amino-acid chain: Recombination protein RecR (199 aa).

A C4-type zinc finger spans residues 57 to 72 (CRQCRTLTEDELCPQC). The Toprim domain occupies 80–174 (SLLCVVQSPV…TISRIAHGVP (95 aa)).

This sequence belongs to the RecR family.

Its function is as follows. May play a role in DNA repair. It seems to be involved in an RecBC-independent recombinational process of DNA repair. It may act with RecF and RecO. This chain is Recombination protein RecR, found in Stutzerimonas stutzeri (strain A1501) (Pseudomonas stutzeri).